Here is a 92-residue protein sequence, read N- to C-terminus: UPF0125 protein NMA1005 (92 aa).

The protein belongs to the UPF0125 (RnfH) family.

The sequence is that of UPF0125 protein NMA1005 from Neisseria meningitidis serogroup A / serotype 4A (strain DSM 15465 / Z2491).